The primary structure comprises 200 residues: Dephospho-CoA kinase (200 aa).

Residues 3–200 (KVGLTGGIGS…EELQRRLHSR (198 aa)) form the DPCK domain. 11–16 (GSGKSS) lines the ATP pocket.

Belongs to the CoaE family.

It is found in the cytoplasm. The enzyme catalyses 3'-dephospho-CoA + ATP = ADP + CoA + H(+). It participates in cofactor biosynthesis; coenzyme A biosynthesis; CoA from (R)-pantothenate: step 5/5. In terms of biological role, catalyzes the phosphorylation of the 3'-hydroxyl group of dephosphocoenzyme A to form coenzyme A. The protein is Dephospho-CoA kinase of Thermobifida fusca (strain YX).